Here is a 484-residue protein sequence, read N- to C-terminus: Putative myrosinase 6 (484 aa).

Asn-28 carries N-linked (GlcNAc...) asparagine glycosylation. A beta-D-glucoside contacts are provided by residues Gln-39, His-140, and Asn-184–Gln-185. A disulfide bridge links Cys-204 with Cys-207. Asn-260 carries an N-linked (GlcNAc...) asparagine glycan. Residues Tyr-321, Trp-440, Glu-447–Phe-448, and Phe-456 contribute to the a beta-D-glucoside site. The N-linked (GlcNAc...) asparagine glycan is linked to Asn-462.

It belongs to the glycosyl hydrolase 1 family.

The enzyme catalyses a thioglucoside + H2O = a sugar + a thiol.. The polypeptide is Putative myrosinase 6 (Arabidopsis thaliana (Mouse-ear cress)).